Here is a 142-residue protein sequence, read N- to C-terminus: Spliceosomal protein DIB1 (142 aa).

The protein belongs to the DIM1 family. As to quaternary structure, component of the 25S [U4/U6.U5] tri-snRNP.

The protein resides in the nucleus. Essential role in pre-mRNA splicing. Also essential for entry into mitosis (G2/M progression) as well as for chromosome segregation during mitosis. This chain is Spliceosomal protein DIB1 (DIB1), found in Candida glabrata (strain ATCC 2001 / BCRC 20586 / JCM 3761 / NBRC 0622 / NRRL Y-65 / CBS 138) (Yeast).